We begin with the raw amino-acid sequence, 734 residues long: MNSMKTEENKSFSAMEDDQRTRPEVSKDTVMKQTHADTPVDHCLSGIRKCSSTFKLKSEVNKHETALEMQNPNLNNKECCFTFTLNGNSRKLDRSVFTAYGKPSESIYSALSANDYFSERIKNQFNKNIIVYEEKTIDGHINLGMPLKCLPSDSHFKITFGQRKSSKEDGHILRQCENPNMECILFHVVAIGRTRKKIVKINELHEKGSKLCIYALKGETIEGALCKDGRFRSDIGEFEWKLKEGHKKIYGKQSMVDEVSGKVLEMDISKKKALQQKDIHKKIKQNESATDEINHQSLIQSKKKVHKPKKDGETKDVEHSREQILPPQDLSHYIKDKTRQTIPRIRNYYFCSLPRKYRQINSQVRRRPHLGRRYAINLDVQKEAINLLKNYQTLNEAIMHQYPNFKEEAQWVRKYFREEQKRMNLSPAKQFNIYKKDFGKMTANSVSVATCEQLTYYSKSVGFMQWDNNGNTGNATCFVFNGGYIFTCRHVVHLMVGKNTHPSLWPDIISKCAKVTFTYTEFCPTPDNWFSIEPWLKVSNENLDYAILKLKENGNAFPPGLWRQISPQPSTGLIYLIGHPEGQIKKIDGCTVIPLNERLKKYPNDCQDGLVDLYDTTSNVYCMFTQRSFLSEVWNTHTLSYDTCFSDGSSGSPVFNASGKLVALHTFGLFYQRGFNVHALIEFGYSMDSILCDIKKTNESLYKSLNDEKLETYDEEKGKQESSLQDHQIEPMEC.

M1 carries the post-translational modification N-acetylmethionine. 2 stretches are compositionally biased toward basic and acidic residues: residues M1–K10 and D17–K32. The segment at M1–K32 is disordered. K284 is covalently cross-linked (Glycyl lysine isopeptide (Lys-Gly) (interchain with G-Cter in SUMO2)). The segment at Q285–R321 is disordered. Residues K310–R321 are compositionally biased toward basic and acidic residues. Catalysis depends on charge relay system residues H490, D544, and S650. Residues T712–C734 form a disordered region.

The protein belongs to the FAM111 family. In terms of tissue distribution, widely expressed.

Serine protease. This is Serine protease FAM111B from Homo sapiens (Human).